An 822-amino-acid chain; its full sequence is Ras GTPase-activating-like protein rgaA (822 aa).

A disordered region spans residues 1–36 (MNKEEYSDISDSESEEVHETNNHNEHEHEEEDDTPE). The span at 15 to 27 (EEVHETNNHNEHE) shows a compositional bias: basic and acidic residues. Positions 104–152 (EDKESDWIAEIQELKRNLVSEVRRNHTLERDLNRLDKRIALLIKNRGNI) form a coiled coil. Positions 161–822 (GLKAPKHKGD…IHLLNKLFLY (662 aa)) are required for interaction to rac1A. Residues 234–477 (FLLLSLYRLS…GDIKNYLQEI (244 aa)) form the Ras-GAP domain.

In terms of assembly, heterotetramer. Quaternary complex with activated rac1A, ctxA and ctxB. Interacts directly with rac1A and ctxA. Preferentially interacts with activated forms of rac1A, rac1B and rac1C. Interacts with racE.

It is found in the cytoplasm. It localises to the cell cortex. The protein resides in the cleavage furrow. In terms of biological role, part of signaling pathway that is required for completion of cytokinesis. gapA and rgaA control cortexillin localization to the cleavage furrow and hence may be involved in cleavage of the midbody in the final stage of cytokinesis by regulating the actin cytoskeleton. Forms a complex by linking activated rac1A to ctxA. Assembly of this complex is necessary for the recruitment of cortexillin to the midzone of a dividing cell. Overexpression leads to the suppression of the formation of cellular projections containing F-actin and to a defect in cytokinesis. The sequence is that of Ras GTPase-activating-like protein rgaA (rgaA) from Dictyostelium discoideum (Social amoeba).